Reading from the N-terminus, the 418-residue chain is Gamma-glutamyl phosphate reductase (418 aa).

It belongs to the gamma-glutamyl phosphate reductase family.

The protein localises to the cytoplasm. The catalysed reaction is L-glutamate 5-semialdehyde + phosphate + NADP(+) = L-glutamyl 5-phosphate + NADPH + H(+). It functions in the pathway amino-acid biosynthesis; L-proline biosynthesis; L-glutamate 5-semialdehyde from L-glutamate: step 2/2. Catalyzes the NADPH-dependent reduction of L-glutamate 5-phosphate into L-glutamate 5-semialdehyde and phosphate. The product spontaneously undergoes cyclization to form 1-pyrroline-5-carboxylate. This Citrifermentans bemidjiense (strain ATCC BAA-1014 / DSM 16622 / JCM 12645 / Bem) (Geobacter bemidjiensis) protein is Gamma-glutamyl phosphate reductase.